The primary structure comprises 468 residues: Probable serine/threonine-protein phosphatase 2A activator 2 (468 aa).

A compositionally biased stretch (low complexity) spans 412-424 (STTTNNNNNNITS). Residues 412 to 468 (STTTNNNNNNITSGDHCNDNEQQCSETHNHDHNHNHNHNHNHPPPPPQQQRSYFPLD) are disordered.

Belongs to the PTPA-type PPIase family.

Its subcellular location is the cytoplasm. It catalyses the reaction [protein]-peptidylproline (omega=180) = [protein]-peptidylproline (omega=0). Its function is as follows. PPIases accelerate the folding of proteins. It catalyzes the cis-trans isomerization of proline imidic peptide bonds in oligopeptides. Acts as a regulatory subunit for PP2A-like phosphatases modulating their activity or substrate specificity, probably by inducing a conformational change in the catalytic subunit, a direct target of the PPIase. The chain is Probable serine/threonine-protein phosphatase 2A activator 2 (ppp2r4B) from Dictyostelium discoideum (Social amoeba).